A 990-amino-acid polypeptide reads, in one-letter code: Protein argonaute 7 (990 aa).

Residues 1–13 are compositionally biased toward basic residues; sequence MEEKTHHHHHSTN. A disordered region spans residues 1-25; the sequence is MEEKTHHHHHSTNKHIPSSKSRTPL. Residues 379 to 484 enclose the PAZ domain; the sequence is EFLTDLPRNK…LPMELCMICE (106 aa). A Piwi domain is found at 649-950; sequence LIICVMEKKH…AAYRGRLYIE (302 aa). A disordered region spans residues 953–973; that stretch reads SESNGGSMNPSSVSRVGPPKT. Residues 954–966 show a composition bias toward polar residues; it reads ESNGGSMNPSSVS.

It belongs to the argonaute family. Ago subfamily. Expressed in leaves and floral buds, and at low levels in roots.

Involved in RNA-mediated post-transcriptional gene silencing (PTGS). Main component of the RNA-induced silencing complex (RISC) that binds to a short guide RNA such as a microRNA (miRNA) or small interfering RNA (siRNA). RISC uses the mature miRNA or siRNA as a guide for slicer-directed cleavage of homologous mRNAs to repress gene expression. Required for the processing of 21 nucleotide trans-acting siRNAs (ta-siRNAs) derived from TAS3a transcripts. Associates preferentially with the microRNA (miRNA) miR390 which guides the cleavage of TAS3 precursor RNA. Seems to act as miR390 specific slicer. Associates mainly with small RNAs of 21 nucleotide in length and with a 5' terminal adenosine. Acts in the RDR6/SGS3/DCL4/AGO7 trans-acting siRNA pathway involved in leaf developmental timing. Does not seem to act on leaf polarity. Required for the production of the 30-40nt bacterial-induced long siRNAs (lsiRNA). Involved in antiviral RNA silencing by contributing to efficient viral RNAs clearance. Targets less structured viral RNAs than AGO1 which is capable of targeting RNAs with more compact structures. In Arabidopsis thaliana (Mouse-ear cress), this protein is Protein argonaute 7 (AGO7).